The chain runs to 397 residues: Probable N-succinyldiaminopimelate aminotransferase DapC (397 aa).

Pyridoxal 5'-phosphate-binding positions include 109 to 110 (GS) and 218 to 222 (DGMAE). Residue K232 is modified to N6-(pyridoxal phosphate)lysine.

This sequence belongs to the class-III pyridoxal-phosphate-dependent aminotransferase family. As to quaternary structure, homodimer. Pyridoxal 5'-phosphate serves as cofactor.

It is found in the cytoplasm. The enzyme catalyses N-succinyl-(2S,6S)-2,6-diaminopimelate + 2-oxoglutarate = (S)-2-succinylamino-6-oxoheptanedioate + L-glutamate. The protein operates within amino-acid biosynthesis; L-lysine biosynthesis via DAP pathway; LL-2,6-diaminopimelate from (S)-tetrahydrodipicolinate (succinylase route): step 2/3. In terms of biological role, involved in the lysine biosynthetic pathways. It catalyzes the transfer of an amino group from L-glutamate to N-succinyl-2-l-amino-6-oxoheptanedioate (N-succinyl-2-l-amino-6-ketopimelate) in a PLP-dependent reaction, yielding as products N-succinyl-l-2,6-diaminoheptanedioate (N-succinyl-diaminopimelate) and 2-oxoglutarate. The protein is Probable N-succinyldiaminopimelate aminotransferase DapC (dapC) of Mycobacterium tuberculosis (strain CDC 1551 / Oshkosh).